The primary structure comprises 108 residues: Large ribosomal subunit protein eL33A (108 aa).

Belongs to the eukaryotic ribosomal protein eL33 family. As to quaternary structure, component of the large ribosomal subunit (LSU). Mature yeast ribosomes consist of a small (40S) and a large (60S) subunit. The 40S small subunit contains 1 molecule of ribosomal RNA (18S rRNA) and at least 33 different proteins. The large 60S subunit contains 3 rRNA molecules (25S, 5.8S and 5S rRNA) and at least 46 different proteins.

The protein resides in the cytoplasm. Its subcellular location is the nucleus. It is found in the nucleolus. Its function is as follows. Component of the ribosome, a large ribonucleoprotein complex responsible for the synthesis of proteins in the cell. The small ribosomal subunit (SSU) binds messenger RNAs (mRNAs) and translates the encoded message by selecting cognate aminoacyl-transfer RNA (tRNA) molecules. The large subunit (LSU) contains the ribosomal catalytic site termed the peptidyl transferase center (PTC), which catalyzes the formation of peptide bonds, thereby polymerizing the amino acids delivered by tRNAs into a polypeptide chain. The nascent polypeptides leave the ribosome through a tunnel in the LSU and interact with protein factors that function in enzymatic processing, targeting, and the membrane insertion of nascent chains at the exit of the ribosomal tunnel. In Schizosaccharomyces pombe (strain 972 / ATCC 24843) (Fission yeast), this protein is Large ribosomal subunit protein eL33A (rpl35b).